A 988-amino-acid chain; its full sequence is UvrABC system protein A (988 aa).

Residue 33-40 (GLSGSGKS) participates in ATP binding. The C4-type zinc finger occupies 255–282 (CPVCDYSLPELEPRLFSFNAPVGACPSC). ABC transporter domains are found at residues 312–589 (WDRR…PRSL) and 609–938 (PNPK…QFLA). 642–649 (GVSGSGKS) is an ATP binding site. Residues 741–767 (CEACQGDGMIKVEMHFLPDVYVPCDVC) form a C4-type zinc finger. The disordered stretch occupies residues 948–988 (ETRPAAMANKPDARPPRKVKPEKVAKATKTATKKTAKKKAS). Over residues 958–972 (PDARPPRKVKPEKVA) the composition is skewed to basic and acidic residues. Basic residues predominate over residues 978-988 (ATKKTAKKKAS).

The protein belongs to the ABC transporter superfamily. UvrA family. In terms of assembly, forms a heterotetramer with UvrB during the search for lesions.

The protein resides in the cytoplasm. In terms of biological role, the UvrABC repair system catalyzes the recognition and processing of DNA lesions. UvrA is an ATPase and a DNA-binding protein. A damage recognition complex composed of 2 UvrA and 2 UvrB subunits scans DNA for abnormalities. When the presence of a lesion has been verified by UvrB, the UvrA molecules dissociate. This is UvrABC system protein A from Xanthomonas campestris pv. campestris (strain ATCC 33913 / DSM 3586 / NCPPB 528 / LMG 568 / P 25).